We begin with the raw amino-acid sequence, 158 residues long: 2-C-methyl-D-erythritol 2,4-cyclodiphosphate synthase (158 aa).

A divalent metal cation contacts are provided by Asp9 and His11. Residues 9 to 11 (DAH) and 35 to 36 (HS) contribute to the 4-CDP-2-C-methyl-D-erythritol 2-phosphate site. His43 contributes to the a divalent metal cation binding site. Residues 57–59 (DIG), 62–66 (FPDTD), 133–136 (TTTE), Phe140, and Arg143 contribute to the 4-CDP-2-C-methyl-D-erythritol 2-phosphate site.

This sequence belongs to the IspF family. As to quaternary structure, homotrimer. The cofactor is a divalent metal cation.

The catalysed reaction is 4-CDP-2-C-methyl-D-erythritol 2-phosphate = 2-C-methyl-D-erythritol 2,4-cyclic diphosphate + CMP. The protein operates within isoprenoid biosynthesis; isopentenyl diphosphate biosynthesis via DXP pathway; isopentenyl diphosphate from 1-deoxy-D-xylulose 5-phosphate: step 4/6. Its function is as follows. Involved in the biosynthesis of isopentenyl diphosphate (IPP) and dimethylallyl diphosphate (DMAPP), two major building blocks of isoprenoid compounds. Catalyzes the conversion of 4-diphosphocytidyl-2-C-methyl-D-erythritol 2-phosphate (CDP-ME2P) to 2-C-methyl-D-erythritol 2,4-cyclodiphosphate (ME-CPP) with a corresponding release of cytidine 5-monophosphate (CMP). The protein is 2-C-methyl-D-erythritol 2,4-cyclodiphosphate synthase of Methylococcus capsulatus (strain ATCC 33009 / NCIMB 11132 / Bath).